The chain runs to 150 residues: Large ribosomal subunit protein bL9 (150 aa).

The protein belongs to the bacterial ribosomal protein bL9 family.

In terms of biological role, binds to the 23S rRNA. The sequence is that of Large ribosomal subunit protein bL9 from Desulforudis audaxviator (strain MP104C).